The primary structure comprises 1242 residues: Receptor-type adenylate cyclase GRESAG 4.1 (1242 aa).

Residues 1-39 (MHWQEGGGRGCVYTHGNCRRNLTARALQALQHVEALTCH) lie on the Cytoplasmic side of the membrane. A helical membrane pass occupies residues 40-60 (YCVSLLHLLPLLLMWMPPVCA). Over 61 to 862 (DDSAVTVNVL…THTVTDSWNN (802 aa)) the chain is Extracellular. N-linked (GlcNAc...) asparagine glycosylation is found at Asn116, Asn289, Asn318, Asn338, Asn401, Asn534, Asn563, Asn603, Asn702, Asn741, and Asn818. Residues 863 to 883 (FWVCIRLVIIYCPWCVPTHLP) form a helical membrane-spanning segment. Residues 884–1242 (AERRNNNRAP…PFYDMHLQEY (359 aa)) lie on the Cytoplasmic side of the membrane. A Guanylate cyclase domain is found at 901–1056 (TLIFTDIESS…RTPNMAARTE (156 aa)). Mg(2+) contacts are provided by Asp906 and Asp949.

This sequence belongs to the adenylyl cyclase class-3 family. The cofactor is Mg(2+).

The protein localises to the membrane. The catalysed reaction is ATP = 3',5'-cyclic AMP + diphosphate. Could act as a receptor for an unknown ligand. This is Receptor-type adenylate cyclase GRESAG 4.1 (GRESAG 4.1) from Trypanosoma brucei brucei.